A 162-amino-acid chain; its full sequence is Caveolin-2 (162 aa).

Topologically, residues methionine 1–lysine 86 are cytoplasmic. Tyrosine 19 is subject to Phosphotyrosine; by SRC. 2 positions are modified to phosphoserine: serine 20 and serine 23. Residue tyrosine 27 is modified to Phosphotyrosine; by SRC. Serine 36 is modified (phosphoserine). Residues phenylalanine 87 to leucine 107 constitute an intramembrane region (helical). The Cytoplasmic segment spans residues serine 108–aspartate 162.

It belongs to the caveolin family. As to quaternary structure, monomer or homodimer. Interacts with CAV1; the interaction forms a stable heterooligomeric complex that is required for targeting to lipid rafts and for caveolae formation. Tyrosine phosphorylated forms do not form heterooligomers with the Tyr-19-phosphorylated form existing as a monomer or dimer, and the Tyr-27-form as a monomer only. Interacts (tyrosine phosphorylated form) with the SH2 domain-containing proteins, RASA1, NCK1 and SRC. Interacts (tyrosine phosphorylated form) with INSR, the interaction (Tyr-27-phosphorylated form) is increased on insulin stimulation. Interacts (Tyr-19 phosphorylated form) with MAPK1 (phosphorylated form); the interaction, promoted by insulin, leads to nuclear location and MAPK1 activation. Interacts with STAT3; the interaction is increased on insulin-induced tyrosine phosphorylation leading to STAT activation. In terms of processing, phosphorylated on serine and tyrosine residues. CAV1 promotes phosphorylation on Ser-23 which then targets the complex to the plasma membrane, lipid rafts and caveolae. Phosphorylation on Ser-36 appears to modulate mitosis in endothelial cells. Phosphorylation on both Tyr-19 and Tyr-27 is required for insulin-induced 'Ser-727' phosphorylation of STAT3 and its activation. Phosphorylation on Tyr-19 is required for insulin-induced phosphorylation of MAPK1 and DNA binding of STAT3. Tyrosine phosphorylation is induced by both EGF and insulin (By. similarity).

It localises to the nucleus. It is found in the cytoplasm. Its subcellular location is the golgi apparatus membrane. The protein resides in the cell membrane. The protein localises to the membrane. It localises to the caveola. May act as a scaffolding protein within caveolar membranes. Interacts directly with G-protein alpha subunits and can functionally regulate their activity. Acts as an accessory protein in conjunction with CAV1 in targeting to lipid rafts and driving caveolae formation. The Ser-36 phosphorylated form has a role in modulating mitosis in endothelial cells. Positive regulator of cellular mitogenesis of the MAPK signaling pathway. Required for the insulin-stimulated nuclear translocation and activation of MAPK1 and STAT3, and the subsequent regulation of cell cycle progression. The sequence is that of Caveolin-2 (CAV2) from Mustela putorius furo (European domestic ferret).